A 173-amino-acid polypeptide reads, in one-letter code: Crossover junction endodeoxyribonuclease RuvC (173 aa).

Catalysis depends on residues D8, E67, and D139. 3 residues coordinate Mg(2+): D8, E67, and D139.

This sequence belongs to the RuvC family. In terms of assembly, homodimer which binds Holliday junction (HJ) DNA. The HJ becomes 2-fold symmetrical on binding to RuvC with unstacked arms; it has a different conformation from HJ DNA in complex with RuvA. In the full resolvosome a probable DNA-RuvA(4)-RuvB(12)-RuvC(2) complex forms which resolves the HJ. The cofactor is Mg(2+).

The protein resides in the cytoplasm. The catalysed reaction is Endonucleolytic cleavage at a junction such as a reciprocal single-stranded crossover between two homologous DNA duplexes (Holliday junction).. The RuvA-RuvB-RuvC complex processes Holliday junction (HJ) DNA during genetic recombination and DNA repair. Endonuclease that resolves HJ intermediates. Cleaves cruciform DNA by making single-stranded nicks across the HJ at symmetrical positions within the homologous arms, yielding a 5'-phosphate and a 3'-hydroxyl group; requires a central core of homology in the junction. The consensus cleavage sequence is 5'-(A/T)TT(C/G)-3'. Cleavage occurs on the 3'-side of the TT dinucleotide at the point of strand exchange. HJ branch migration catalyzed by RuvA-RuvB allows RuvC to scan DNA until it finds its consensus sequence, where it cleaves and resolves the cruciform DNA. Its function is as follows. Plays a role in recovery after DNA ADP-ribosylation, probably via replication fork reversal. This Escherichia coli O127:H6 (strain E2348/69 / EPEC) protein is Crossover junction endodeoxyribonuclease RuvC.